Reading from the N-terminus, the 334-residue chain is Rhomboid-like protein 14, mitochondrial (334 aa).

The transit peptide at 1–87 (MENFGEGRRS…RLFLSAFYHV (87 aa)) directs the protein to the mitochondrion. Transmembrane regions (helical) follow at residues 114–134 (EFAS…LLLA), 146–166 (AYYN…KVVL), 176–196 (VYGI…LVQM), and 197–217 (FVPN…IIYL). Ser156 functions as the Nucleophile in the catalytic mechanism. His206 (charge relay system) is an active-site residue. The RanBP2-type zinc finger occupies 273 to 302 (GPGIWRCQSCTYDNSGWLSACEMCGSGRAR).

Belongs to the peptidase S54 family.

It is found in the mitochondrion membrane. Probable rhomboid-type serine protease that catalyzes intramembrane proteolysis. May function in the heat-shock response pathway. This Arabidopsis thaliana (Mouse-ear cress) protein is Rhomboid-like protein 14, mitochondrial.